A 362-amino-acid chain; its full sequence is Heat-inducible transcription repressor HrcA (362 aa).

The protein belongs to the HrcA family.

In terms of biological role, negative regulator of class I heat shock genes (grpE-dnaK-dnaJ and groELS operons). Prevents heat-shock induction of these operons. The polypeptide is Heat-inducible transcription repressor HrcA (Rhodopseudomonas palustris (strain ATCC BAA-98 / CGA009)).